An 89-amino-acid polypeptide reads, in one-letter code: Large ribosomal subunit protein bL27 (89 aa).

The disordered stretch occupies residues 1 to 26 (MAHKKAGGSSKNGRDSNAQRRGVKRF).

Belongs to the bacterial ribosomal protein bL27 family.

The polypeptide is Large ribosomal subunit protein bL27 (Maridesulfovibrio salexigens (strain ATCC 14822 / DSM 2638 / NCIMB 8403 / VKM B-1763) (Desulfovibrio salexigens)).